The primary structure comprises 213 residues: Kynurenine formamidase (213 aa).

Tryptophan 18 is a substrate binding site. 3 residues coordinate Zn(2+): histidine 48, histidine 52, and aspartate 54. Histidine 58 serves as the catalytic Proton donor/acceptor. The Zn(2+) site is built by histidine 160 and glutamate 172.

This sequence belongs to the Cyclase 1 superfamily. KynB family. As to quaternary structure, homodimer. It depends on Zn(2+) as a cofactor.

The enzyme catalyses N-formyl-L-kynurenine + H2O = L-kynurenine + formate + H(+). The protein operates within amino-acid degradation; L-tryptophan degradation via kynurenine pathway; L-kynurenine from L-tryptophan: step 2/2. In terms of biological role, catalyzes the hydrolysis of N-formyl-L-kynurenine to L-kynurenine, the second step in the kynurenine pathway of tryptophan degradation. This Burkholderia pseudomallei (strain 668) protein is Kynurenine formamidase.